Reading from the N-terminus, the 338-residue chain is Glycerol-3-phosphate dehydrogenase [NAD(P)+] (338 aa).

Residues Ser-18, Tyr-19, His-39, and Lys-113 each contribute to the NADPH site. Sn-glycerol 3-phosphate-binding residues include Lys-113, Gly-142, and Thr-144. Residue Ala-146 participates in NADPH binding. Sn-glycerol 3-phosphate contacts are provided by Lys-198, Asp-251, Ser-261, Arg-262, and Asn-263. Catalysis depends on Lys-198, which acts as the Proton acceptor. Residue Arg-262 participates in NADPH binding. Positions 286 and 288 each coordinate NADPH.

The protein belongs to the NAD-dependent glycerol-3-phosphate dehydrogenase family.

It is found in the cytoplasm. The enzyme catalyses sn-glycerol 3-phosphate + NAD(+) = dihydroxyacetone phosphate + NADH + H(+). The catalysed reaction is sn-glycerol 3-phosphate + NADP(+) = dihydroxyacetone phosphate + NADPH + H(+). It functions in the pathway membrane lipid metabolism; glycerophospholipid metabolism. Its function is as follows. Catalyzes the reduction of the glycolytic intermediate dihydroxyacetone phosphate (DHAP) to sn-glycerol 3-phosphate (G3P), the key precursor for phospholipid synthesis. The sequence is that of Glycerol-3-phosphate dehydrogenase [NAD(P)+] from Photobacterium profundum (strain SS9).